The primary structure comprises 423 residues: 5-hydroxytryptamine receptor 1A (423 aa).

The Extracellular portion of the chain corresponds to 1–38 (MEGLSPRQGNNTTSSEGPFGTLGNATGISDVTFSYQVI). Asn10, Asn11, and Asn24 each carry an N-linked (GlcNAc...) asparagine glycan. Residues 39-59 (TSLLLGTLIFCAVLGNACVVA) form a helical membrane-spanning segment. Residues 60-73 (AIALERSLQNVANY) lie on the Cytoplasmic side of the membrane. A helical transmembrane segment spans residues 74-98 (LIGSLAVTDLMVSVLVLPMAALYQV). The Extracellular portion of the chain corresponds to 99 to 107 (LNKWTLGQV). Residues 108-132 (TCDLFIALDVLCCTSSILHLCAIAL) traverse the membrane as a helical segment. The cysteines at positions 109 and 187 are disulfide-linked. Serotonin contacts are provided by Asp116 and Cys120. A DRY motif; important for ligand-induced conformation changes motif is present at residues 133 to 135 (DRY). Over 133 to 152 (DRYWAITDPIDYVNKRTPRR) the chain is Cytoplasmic. The chain crosses the membrane as a helical span at residues 153–174 (AAALISLTWLIGFLISIPPMLG). Topologically, residues 175–193 (WRTPEDRSDPDACTISKDH) are extracellular. The chain crosses the membrane as a helical span at residues 194–216 (GYTIYSTFGAFYIPLLLMLVLYG). The Cytoplasmic segment spans residues 217-346 (RIFRAARFRI…LARERKTVKT (130 aa)). A disordered region spans residues 235–277 (RKGADARSGVSPAPQPRKSVNGEPGGREWRQGPGSQAGGPLCT). Residues Lys345, Thr346, and Gly352 each coordinate 1D-myo-inositol 4-phosphate. A helical transmembrane segment spans residues 347 to 370 (LGIIMGTFILCWLPFFIVALVLPF). Over 371-378 (CESSCHMP) the chain is Extracellular. The helical transmembrane segment at 379-403 (TLLGAIINWLGYSNSLLNPVIYAYF) threads the bilayer. The NPxxY motif; important for ligand-induced conformation changes and signaling signature appears at 396–400 (NPVIY). 1D-myo-inositol 4-phosphate-binding residues include Phe403, Asn404, and Lys405. Residues 404 to 423 (NKDFQNAFKKIVRCKFCRRR) are Cytoplasmic-facing.

It belongs to the G-protein coupled receptor 1 family. 5-hydroxytryptamine receptor subfamily. HTR1A sub-subfamily. Heterodimer; heterodimerizes with GPER1. Interacts with YIF1B. Interacts with GPR39 and GALR1.

It localises to the cell membrane. Its subcellular location is the cell projection. It is found in the dendrite. Its activity is regulated as follows. G-protein coupled receptor activity is regulated by lipids: phosphatidylinositol 4-phosphate increases HTR1A-mediated activity. Functionally, G-protein coupled receptor for 5-hydroxytryptamine (serotonin). Also functions as a receptor for various drugs and psychoactive substances. Ligand binding causes a conformation change that triggers signaling via guanine nucleotide-binding proteins (G proteins) and modulates the activity of downstream effectors, such as adenylate cyclase. HTR1A is coupled to G(i)/G(o) G alpha proteins and mediates inhibitory neurotransmission: signaling inhibits adenylate cyclase activity and activates a phosphatidylinositol-calcium second messenger system that regulates the release of Ca(2+) ions from intracellular stores. Beta-arrestin family members regulate signaling by mediating both receptor desensitization and resensitization processes. The chain is 5-hydroxytryptamine receptor 1A (HTR1A) from Canis lupus familiaris (Dog).